A 440-amino-acid chain; its full sequence is MEYTPSPKPQLSSRANAFSIAALMSSGTPKDKETQESTIKPLEQFVEKSSCSQPLGDISIVDSHGEFTNSPSSLCTEPLIPTTPVIPSEEMAKISCSLETKELWDKFHDLGTEMIITKSGRRMFPTIRVSFSGVDADAKYIVLMDIVPVDNKRYRYAYHRSSWLVAGKADPPLPARLYVHPDSPFTGEQLLKQMVSFEKVKLTNNELDQHGHIILNSMHKYQPRVHIIKKKDHTASLLNLKSEEFRTFIFQETVFTAVTAYQNQLITKLKIDSNPFAKGFRDSSRLTDIERESVESLIQKHSYARSPIRTYGDEDVLGEDGQTMQSRGSAFTTSENLSLSSWVSSTSGFSGFQHPQSLTALGTSTASLATPIPHPIQGTLPPYSRLGMPITPSALASSMQGSGPTFPSFHMPRYHHYFQQGPYAAIQGLRHSSAVMTPFV.

Positions 103–282 (LWDKFHDLGT…SNPFAKGFRD (180 aa)) form a DNA-binding region, T-box.

The protein localises to the nucleus. Functionally, transcriptional regulator that may be involved in heart developmental processes. In Xenopus tropicalis (Western clawed frog), this protein is T-box transcription factor TBX20 (tbx20).